The sequence spans 235 residues: Phosphoribosylaminoimidazole-succinocarboxamide synthase (235 aa).

This sequence belongs to the SAICAR synthetase family.

The enzyme catalyses 5-amino-1-(5-phospho-D-ribosyl)imidazole-4-carboxylate + L-aspartate + ATP = (2S)-2-[5-amino-1-(5-phospho-beta-D-ribosyl)imidazole-4-carboxamido]succinate + ADP + phosphate + 2 H(+). It participates in purine metabolism; IMP biosynthesis via de novo pathway; 5-amino-1-(5-phospho-D-ribosyl)imidazole-4-carboxamide from 5-amino-1-(5-phospho-D-ribosyl)imidazole-4-carboxylate: step 1/2. The protein is Phosphoribosylaminoimidazole-succinocarboxamide synthase of Clostridium perfringens (strain SM101 / Type A).